We begin with the raw amino-acid sequence, 238 residues long: 1-(5-phosphoribosyl)-5-[(5-phosphoribosylamino)methylideneamino] imidazole-4-carboxamide isomerase (238 aa).

The Proton acceptor role is filled by aspartate 8. Aspartate 130 functions as the Proton donor in the catalytic mechanism.

Belongs to the HisA/HisF family.

The protein resides in the cytoplasm. It catalyses the reaction 1-(5-phospho-beta-D-ribosyl)-5-[(5-phospho-beta-D-ribosylamino)methylideneamino]imidazole-4-carboxamide = 5-[(5-phospho-1-deoxy-D-ribulos-1-ylimino)methylamino]-1-(5-phospho-beta-D-ribosyl)imidazole-4-carboxamide. It participates in amino-acid biosynthesis; L-histidine biosynthesis; L-histidine from 5-phospho-alpha-D-ribose 1-diphosphate: step 4/9. The polypeptide is 1-(5-phosphoribosyl)-5-[(5-phosphoribosylamino)methylideneamino] imidazole-4-carboxamide isomerase (Methanococcus maripaludis (strain C6 / ATCC BAA-1332)).